The chain runs to 277 residues: Phosphoenolpyruvate synthase regulatory protein (277 aa).

Gly157–Thr164 lines the ADP pocket.

This sequence belongs to the pyruvate, phosphate/water dikinase regulatory protein family. PSRP subfamily.

It catalyses the reaction [pyruvate, water dikinase] + ADP = [pyruvate, water dikinase]-phosphate + AMP + H(+). The catalysed reaction is [pyruvate, water dikinase]-phosphate + phosphate + H(+) = [pyruvate, water dikinase] + diphosphate. Its function is as follows. Bifunctional serine/threonine kinase and phosphorylase involved in the regulation of the phosphoenolpyruvate synthase (PEPS) by catalyzing its phosphorylation/dephosphorylation. The chain is Phosphoenolpyruvate synthase regulatory protein from Salmonella gallinarum (strain 287/91 / NCTC 13346).